A 110-amino-acid polypeptide reads, in one-letter code: Large ribosomal subunit protein uL22 (110 aa).

This sequence belongs to the universal ribosomal protein uL22 family. Part of the 50S ribosomal subunit.

Its function is as follows. This protein binds specifically to 23S rRNA; its binding is stimulated by other ribosomal proteins, e.g. L4, L17, and L20. It is important during the early stages of 50S assembly. It makes multiple contacts with different domains of the 23S rRNA in the assembled 50S subunit and ribosome. In terms of biological role, the globular domain of the protein is located near the polypeptide exit tunnel on the outside of the subunit, while an extended beta-hairpin is found that lines the wall of the exit tunnel in the center of the 70S ribosome. This Marinomonas sp. (strain MWYL1) protein is Large ribosomal subunit protein uL22.